The sequence spans 113 residues: U11-theraphotoxin-Hhn1f (113 aa).

Positions 1–21 are cleaved as a signal peptide; the sequence is MNTVRVTFLLVFVLAVSLGQA. Positions 22–74 are excised as a propeptide; the sequence is DKDENRMEMQEKTEQGKSYLDFAENLLLQKLEELEAKLLEEDSEESRNSRQKR. Positions 61–83 are disordered; the sequence is EEDSEESRNSRQKRCIGEGVPCD. 3 disulfide bridges follow: cysteine 75–cysteine 90, cysteine 82–cysteine 95, and cysteine 89–cysteine 110.

The protein belongs to the neurotoxin 14 (magi-1) family. 01 (HNTX-16) subfamily. In terms of tissue distribution, expressed by the venom gland.

It is found in the secreted. Its function is as follows. Probable ion channel inhibitor. The protein is U11-theraphotoxin-Hhn1f of Cyriopagopus hainanus (Chinese bird spider).